A 360-amino-acid chain; its full sequence is Thioredoxin domain-containing protein 15 (360 aa).

The signal sequence occupies residues 1 to 32; that stretch reads MVPAAGRRPPRVMRLLGWWQVLLWVLGLPVRG. The Extracellular portion of the chain corresponds to 33–321; it reads VEVAEESGRL…GPLPSTLIKS (289 aa). Residues 141 to 173 are disordered; it reads PDREEEYYTEPEVAESDAAPTEDSNNTESLKSP. A compositionally biased stretch (acidic residues) spans 143–155; that stretch reads REEEYYTEPEVAE. The Thioredoxin domain maps to 153-296; sequence VAESDAAPTE…LKIFIFNQTG (144 aa). Residues Asn-187, Asn-194, Asn-206, and Asn-293 are each glycosylated (N-linked (GlcNAc...) asparagine). Residues 322–342 traverse the membrane as a helical segment; that stretch reads VDWLLVFSLFFLISFIMYATI. At 343–360 the chain is on the cytoplasmic side; sequence RTESIRWLIPGQEQEHVE.

It is found in the cell projection. The protein localises to the cilium membrane. In terms of biological role, acts as a positive regulator of ciliary hedgehog signaling. Involved in ciliogenesis. The protein is Thioredoxin domain-containing protein 15 (TXNDC15) of Homo sapiens (Human).